The following is a 335-amino-acid chain: Mitochondrial amidoxime reducing component 2 (335 aa).

The transit peptide at M1–L35 directs the protein to the mitochondrion. Residues K59, K138, and K144 each participate in a glycyl lysine isopeptide (Lys-Gly) (interchain with G-Cter in ubiquitin) cross-link. K156 carries the post-translational modification N6-acetyllysine; alternate. K156 is covalently cross-linked (Glycyl lysine isopeptide (Lys-Gly) (interchain with G-Cter in ubiquitin); alternate). Glycyl lysine isopeptide (Lys-Gly) (interchain with G-Cter in ubiquitin) cross-links involve residues K166, K173, K187, K287, and K294. The region spanning G188–M334 is the MOSC domain.

In terms of assembly, component of a complex composed of cytochrome b5, NADH-cytochrome b5 reductase (CYB5R3) and MTARC2. The cofactor is Mo-molybdopterin. Post-translationally, ubiquitinated by PRKN during mitophagy, leading to its degradation and enhancement of mitophagy. Deubiquitinated by USP30.

It is found in the mitochondrion outer membrane. The protein localises to the peroxisome. It carries out the reaction N(omega)-hydroxy-L-arginine + 2 Fe(II)-[cytochrome b5] + 2 H(+) = L-arginine + 2 Fe(III)-[cytochrome b5] + H2O. In terms of biological role, catalyzes the reduction of N-oxygenated molecules, acting as a counterpart of cytochrome P450 and flavin-containing monooxygenases in metabolic cycles. As a component of prodrug-converting system, reduces a multitude of N-hydroxylated prodrugs particularly amidoximes, leading to increased drug bioavailability. May be involved in mitochondrial N(omega)-hydroxy-L-arginine (NOHA) reduction, regulating endogenous nitric oxide levels and biosynthesis. Postulated to cleave the N-OH bond of N-hydroxylated substrates in concert with electron transfer from NADH to cytochrome b5 reductase then to cytochrome b5, the ultimate electron donor that primes the active site for substrate reduction. The polypeptide is Mitochondrial amidoxime reducing component 2 (Homo sapiens (Human)).